A 497-amino-acid polypeptide reads, in one-letter code: Proline--tRNA ligase (497 aa).

It belongs to the class-II aminoacyl-tRNA synthetase family. ProS type 3 subfamily. Homodimer.

The protein resides in the cytoplasm. It catalyses the reaction tRNA(Pro) + L-proline + ATP = L-prolyl-tRNA(Pro) + AMP + diphosphate. Its function is as follows. Catalyzes the attachment of proline to tRNA(Pro) in a two-step reaction: proline is first activated by ATP to form Pro-AMP and then transferred to the acceptor end of tRNA(Pro). This Deinococcus geothermalis (strain DSM 11300 / CIP 105573 / AG-3a) protein is Proline--tRNA ligase.